Consider the following 331-residue polypeptide: tRNA N6-adenosine threonylcarbamoyltransferase (331 aa).

Residues histidine 107 and histidine 111 each coordinate Fe cation. Residues 129-133, aspartate 162, glycine 175, and asparagine 269 each bind substrate; that span reads LVSGG. Aspartate 297 serves as a coordination point for Fe cation.

It belongs to the KAE1 / TsaD family. Fe(2+) is required as a cofactor.

The protein resides in the cytoplasm. It carries out the reaction L-threonylcarbamoyladenylate + adenosine(37) in tRNA = N(6)-L-threonylcarbamoyladenosine(37) in tRNA + AMP + H(+). Required for the formation of a threonylcarbamoyl group on adenosine at position 37 (t(6)A37) in tRNAs that read codons beginning with adenine. Is involved in the transfer of the threonylcarbamoyl moiety of threonylcarbamoyl-AMP (TC-AMP) to the N6 group of A37, together with TsaE and TsaB. TsaD likely plays a direct catalytic role in this reaction. The chain is tRNA N6-adenosine threonylcarbamoyltransferase from Wolinella succinogenes (strain ATCC 29543 / DSM 1740 / CCUG 13145 / JCM 31913 / LMG 7466 / NCTC 11488 / FDC 602W) (Vibrio succinogenes).